Here is a 147-residue protein sequence, read N- to C-terminus: Large-conductance mechanosensitive channel (147 aa).

Transmembrane regions (helical) follow at residues 8 to 28 (FIMK…AAFG) and 81 to 101 (GIFL…FMII).

Belongs to the MscL family. As to quaternary structure, homopentamer.

It localises to the cell inner membrane. Functionally, channel that opens in response to stretch forces in the membrane lipid bilayer. May participate in the regulation of osmotic pressure changes within the cell. The protein is Large-conductance mechanosensitive channel of Trichlorobacter lovleyi (strain ATCC BAA-1151 / DSM 17278 / SZ) (Geobacter lovleyi).